A 203-amino-acid chain; its full sequence is Orotate phosphoribosyltransferase (203 aa).

Residues arginine 94, lysine 98, histidine 100, and 120–128 each bind 5-phospho-alpha-D-ribose 1-diphosphate; that span reads EDLISTGGS. Residue serine 124 participates in orotate binding.

Belongs to the purine/pyrimidine phosphoribosyltransferase family. PyrE subfamily. As to quaternary structure, homodimer. It depends on Mg(2+) as a cofactor.

It catalyses the reaction orotidine 5'-phosphate + diphosphate = orotate + 5-phospho-alpha-D-ribose 1-diphosphate. It participates in pyrimidine metabolism; UMP biosynthesis via de novo pathway; UMP from orotate: step 1/2. Its function is as follows. Catalyzes the transfer of a ribosyl phosphate group from 5-phosphoribose 1-diphosphate to orotate, leading to the formation of orotidine monophosphate (OMP). The polypeptide is Orotate phosphoribosyltransferase (Staphylococcus aureus (strain MSSA476)).